The primary structure comprises 88 residues: Small ribosomal subunit protein uS15c (88 aa).

Belongs to the universal ribosomal protein uS15 family. In terms of assembly, part of the 30S ribosomal subunit.

It is found in the plastid. It localises to the chloroplast. This Aethionema grandiflorum (Persian stone-cress) protein is Small ribosomal subunit protein uS15c (rps15).